A 375-amino-acid chain; its full sequence is Peptidyl-prolyl cis-trans isomerase D (375 aa).

Residues 7–169 (YFDITIANEP…QAVTISSAGV (163 aa)) enclose the PPIase cyclophilin-type domain. TPR repeat units follow at residues 217-250 (AGKLKEVGTKEFKAGNFAVALDKYQKALRYLDVH), 270-307 (LPLLTNAALCALKLPASPNTSSLVVSLTSRALTLPNLS), and 312-345 (GKALYRRAQAYVLKKDDEAAEKDLKGALECVPGD).

The protein belongs to the cyclophilin-type PPIase family. PPIase D subfamily.

The protein localises to the cytoplasm. The enzyme catalyses [protein]-peptidylproline (omega=180) = [protein]-peptidylproline (omega=0). Its function is as follows. PPIases accelerate the folding of proteins. It catalyzes the cis-trans isomerization of proline imidic peptide bonds in oligopeptides. This chain is Peptidyl-prolyl cis-trans isomerase D (CPR6), found in Cryptococcus neoformans var. neoformans serotype D (strain JEC21 / ATCC MYA-565) (Filobasidiella neoformans).